A 256-amino-acid chain; its full sequence is Thioredoxin-dependent peroxide reductase, mitochondrial (256 aa).

Residues 1-61 (MAAAVGRLLR…KLFSTSSSCH (61 aa)) constitute a mitochondrion transit peptide. The region spanning 63-221 (PAVTQHAPYF…TLRLVKAFQY (159 aa)) is the Thioredoxin domain. Lys83 carries the post-translational modification N6-succinyllysine. At Lys91 the chain carries N6-acetyllysine; alternate. Lys91 bears the N6-succinyllysine; alternate mark. Catalysis depends on Cys108, which acts as the Cysteine sulfenic acid (-SOH) intermediate. Residue Thr146 is modified to Phosphothreonine.

Belongs to the peroxiredoxin family. AhpC/Prx1 subfamily. Homodimer; disulfide-linked, upon oxidation. 6 homodimers assemble to form a ring-like dodecamer. Interacts with NEK6. Interacts with LRRK2. Interacts with MAP3K13. Interacts with RPS6KC1 (via PX domain). In terms of processing, phosphorylated by LRRK2; phosphorylation reduces perodixase activity. The enzyme can be inactivated by further oxidation of the cysteine sulfenic acid (C(P)-SOH) to sulphinic acid (C(P)-SO2H) and sulphonic acid (C(P)-SO3H) instead of its condensation to a disulfide bond. Post-translationally, S-palmitoylated.

Its subcellular location is the mitochondrion. The protein resides in the cytoplasm. The protein localises to the early endosome. The catalysed reaction is a hydroperoxide + [thioredoxin]-dithiol = an alcohol + [thioredoxin]-disulfide + H2O. Functionally, thiol-specific peroxidase that catalyzes the reduction of hydrogen peroxide and organic hydroperoxides to water and alcohols, respectively. Plays a role in cell protection against oxidative stress by detoxifying peroxides. Acts synergistically with MAP3K13 to regulate the activation of NF-kappa-B in the cytosol. Required for the maintenance of physical strength. This chain is Thioredoxin-dependent peroxide reductase, mitochondrial (PRDX3), found in Homo sapiens (Human).